We begin with the raw amino-acid sequence, 211 residues long: Ion-translocating oxidoreductase complex subunit G (211 aa).

The helical transmembrane segment at 9-29 (GLTLAIFACATTGLVALTQYL) threads the bilayer. FMN phosphoryl threonine is present on threonine 175.

It belongs to the RnfG family. In terms of assembly, the complex is composed of six subunits: RnfA, RnfB, RnfC, RnfD, RnfE and RnfG. The cofactor is FMN.

It is found in the cell inner membrane. Its function is as follows. Part of a membrane-bound complex that couples electron transfer with translocation of ions across the membrane. The sequence is that of Ion-translocating oxidoreductase complex subunit G from Vibrio parahaemolyticus serotype O3:K6 (strain RIMD 2210633).